A 542-amino-acid chain; its full sequence is Protein phosphatase 1G (542 aa).

Glycine 2 is lipidated: N-myristoyl glycine. At arginine 22 the chain carries Omega-N-methylarginine. The PPM-type phosphatase domain maps to 26-502 (PYGFSAMQGW…DNMTCIIICF (477 aa)). Mn(2+)-binding residues include aspartate 60 and glycine 61. 2 disordered regions span residues 117 to 136 (IAGRPTEDEDDKDKVADEDD) and 164 to 325 (CQKV…SDSG). Threonine 122 is subject to Phosphothreonine. 2 stretches are compositionally biased toward acidic residues: residues 123 to 136 (EDEDDKDKVADEDD) and 259 to 309 (DSED…DEEM). Lysine 380 carries the post-translational modification N6-acetyllysine. Residues aspartate 438 and aspartate 493 each contribute to the Mn(2+) site. Residues 513–542 (ESGKRKLEEALSTEGAEDTGNSDKKKAKRD) are disordered. Serine 524 is subject to Phosphoserine.

The protein belongs to the PP2C family. As to quaternary structure, interacts with NOL3; may dephosphorylate NOL3. Mg(2+) serves as cofactor. It depends on Mn(2+) as a cofactor. In terms of tissue distribution, highly expressed in testis. Low level of expression in kidney. Also expressed in a number of tissues undergoing proliferation including embryo, uterus at pregnancy, placenta, and ovaries.

The protein localises to the nucleus. Its subcellular location is the membrane. The enzyme catalyses O-phospho-L-seryl-[protein] + H2O = L-seryl-[protein] + phosphate. The catalysed reaction is O-phospho-L-threonyl-[protein] + H2O = L-threonyl-[protein] + phosphate. Functionally, may be involved in regulation of cell cycle. This Mus musculus (Mouse) protein is Protein phosphatase 1G (Ppm1g).